Here is a 200-residue protein sequence, read N- to C-terminus: Protein-methionine-sulfoxide reductase heme-binding subunit MsrQ (200 aa).

Helical transmembrane passes span 8-28, 54-74, 79-99, 116-136, and 153-173; these read ITWLKVALHLAAFLPLVWLFY, LLLATLLVTPLTRLLKQPLLI, LLGLWCFAWATLHLVSYSLLE, PYLTLGIVSWLILLALALTSF, and FIYLVAILAPIHYLWSVKILS.

It belongs to the MsrQ family. In terms of assembly, heterodimer of a catalytic subunit (MsrP) and a heme-binding subunit (MsrQ). FMN is required as a cofactor. It depends on heme b as a cofactor.

It localises to the cell inner membrane. Part of the MsrPQ system that repairs oxidized periplasmic proteins containing methionine sulfoxide residues (Met-O), using respiratory chain electrons. Thus protects these proteins from oxidative-stress damage caused by reactive species of oxygen and chlorine generated by the host defense mechanisms. MsrPQ is essential for the maintenance of envelope integrity under bleach stress, rescuing a wide series of structurally unrelated periplasmic proteins from methionine oxidation. MsrQ provides electrons for reduction to the reductase catalytic subunit MsrP, using the quinone pool of the respiratory chain. The sequence is that of Protein-methionine-sulfoxide reductase heme-binding subunit MsrQ from Cronobacter sakazakii (strain ATCC BAA-894) (Enterobacter sakazakii).